The sequence spans 494 residues: Probable cobyric acid synthase (494 aa).

Positions Ser249–Phe447 constitute a GATase cobBQ-type domain. The active-site Nucleophile is Cys331. The active site involves His439.

It belongs to the CobB/CobQ family. CobQ subfamily.

It functions in the pathway cofactor biosynthesis; adenosylcobalamin biosynthesis. Catalyzes amidations at positions B, D, E, and G on adenosylcobyrinic A,C-diamide. NH(2) groups are provided by glutamine, and one molecule of ATP is hydrogenolyzed for each amidation. This Methanopyrus kandleri (strain AV19 / DSM 6324 / JCM 9639 / NBRC 100938) protein is Probable cobyric acid synthase.